Reading from the N-terminus, the 571-residue chain is RUN and FYVE domain-containing protein 4 (571 aa).

The region spanning 33–166 is the RUN domain; that stretch reads TDTSAELHRL…VAFELDLQQP (134 aa). The tract at residues 174–207 is disordered; sequence MFSESRCSSSTQTQGRRPRKNKDAPKKIPAAYGG. A compositionally biased stretch (polar residues) spans 178-188; it reads SRCSSSTQTQG. A coiled-coil region spans residues 408–481; it reads EVSLQDEIKS…ERRDAMYQEE (74 aa). The segment at 474 to 567 adopts an FYVE-type zinc-finger fold; it reads RDAMYQEELG…CCPPCAQGRE (94 aa). Residues cysteine 521, cysteine 524, cysteine 537, cysteine 540, cysteine 545, cysteine 548, cysteine 559, and cysteine 562 each coordinate Zn(2+).

As to quaternary structure, forms homodimers (via coiled coil domain). Interacts with RAB7A. Forms a ternary complex with RAB7A and LAMP2; the interaction with RAB7A is mediated by RUFY4 (via RUN and coiled coil domains). Interacts with GTP-, but not GDP-bound ARL8A and ARL8B. Interacts with dynactin/DCTN1 and the dynein intermediate chain DYNC1I1/2.

The protein localises to the cytoplasmic vesicle. It localises to the autophagosome. The protein resides in the lysosome. ARL8 effector that promotes the coupling of endolysosomes to dynein-dynactin for retrograde transport along microtubules. Acts by binding both GTP-bound ARL8 and dynein-dynactin. In nonneuronal cells, promotes concentration of endolysosomes in the juxtanuclear area. In hippocampal neurons, drives retrograde transport of endolysosomes from the axon to the soma. Positive regulator of macroautophagy in dendritic cells. Increases autophagic flux, probably by stimulating both autophagosome formation and facilitating tethering with lysosomes. Binds to phosphatidylinositol 3-phosphate (PtdIns3P) through its FYVE-type zinc finger. Positive regulator of osteosclast bone-resorbing activity, possibly by promoting late endosome-lysosome fusion by acting as an adapter protein between RAB7A on late endosomes and LAMP2 on primary lysosomes. This Homo sapiens (Human) protein is RUN and FYVE domain-containing protein 4 (RUFY4).